Reading from the N-terminus, the 308-residue chain is Eukaryotic translation initiation factor 3 subunit G-A (308 aa).

Disordered regions lie at residues 1–35 (MPTG…KPDP) and 177–226 (TGDK…ADDN). The span at 185–194 (GAEPEPAQAP) shows a compositional bias: low complexity. Over residues 209–226 (GGSRRGESMQPNRRADDN) the composition is skewed to basic and acidic residues. The RRM domain occupies 227-305 (ATIRVTNLSE…LILNVEWAKP (79 aa)).

This sequence belongs to the eIF-3 subunit G family. In terms of assembly, component of the eukaryotic translation initiation factor 3 (eIF-3) complex, which is composed of 13 subunits: eif3a, eif3b, eif3c, eif3d, eif3e, eif3f, eif3g, eif3h, eif3i, eif3j, eif3k, eif3l and eif3m.

The protein resides in the cytoplasm. RNA-binding component of the eukaryotic translation initiation factor 3 (eIF-3) complex, which is involved in protein synthesis of a specialized repertoire of mRNAs and, together with other initiation factors, stimulates binding of mRNA and methionyl-tRNAi to the 40S ribosome. The eIF-3 complex specifically targets and initiates translation of a subset of mRNAs involved in cell proliferation. This subunit can bind 18S rRNA. This chain is Eukaryotic translation initiation factor 3 subunit G-A (eif3g-a), found in Xenopus laevis (African clawed frog).